The following is a 415-amino-acid chain: Corticotropin-releasing factor receptor 1 (415 aa).

A signal peptide spans 1 to 23; that stretch reads MGRRPQLRLVKALLLLGLNPVST. Topologically, residues 24–111 are extracellular; the sequence is SLQDQRCENL…CQEILNEEKK (88 aa). 3 cysteine pairs are disulfide-bonded: Cys-30–Cys-54, Cys-44–Cys-87, and Cys-68–Cys-102. N-linked (GlcNAc...) asparagine glycosylation is found at Asn-38, Asn-45, Asn-78, Asn-90, and Asn-98. Residues 99–108 are important for peptide agonist binding; it reads YSECQEILNE. Residues 112–142 traverse the membrane as a helical segment; that stretch reads SKVHYHVAVIINYLGHCISLVALLVAFVLFL. The Cytoplasmic segment spans residues 143–149; the sequence is RLRSIRC. Residues 150-174 form a helical membrane-spanning segment; sequence LRNIIHWNLISAFILRNATWFVVQL. The Extracellular portion of the chain corresponds to 175 to 189; the sequence is TVSPEVHQSNVAWCR. Cys-188 and Cys-258 are joined by a disulfide. The helical transmembrane segment at 190-218 threads the bilayer; it reads LVTAAYNYFHVTNFFWMFGEGCYLHTAIV. Over 219 to 225 the chain is Cytoplasmic; it reads LTYSTDR. Residues 226 to 253 form a helical membrane-spanning segment; the sequence is LRKWMFVCIGWGVPFPIIVAWAIGKLHY. The Extracellular portion of the chain corresponds to 254–269; it reads DNEKCWFGKRPGVYTD. The chain crosses the membrane as a helical span at residues 270 to 295; the sequence is YIYQGPMILVLLINFIFLFNIVRILM. Positions 280 to 290 are important for antagonist binding; that stretch reads LLINFIFLFNI. At 296–306 the chain is on the cytoplasmic side; sequence TKLRASTTSET. A Phosphoserine; by PKA modification is found at Ser-301. A helical transmembrane segment spans residues 307–331; it reads IQYRKAVKATLVLLPLLGITYMLFF. The Extracellular portion of the chain corresponds to 332-338; that stretch reads VNPGEDE. A helical transmembrane segment spans residues 339–368; sequence VSRVVFIYFNSFLESFQGFFVSVFYCFLNS. Over 369–415 the chain is Cytoplasmic; it reads EVRSAIRKRWRRWQDKHSIRARVARAMSIPTSPTRVSFHSIKQSTAV.

The protein belongs to the G-protein coupled receptor 2 family. As to quaternary structure, interacts (via N-terminal extracellular domain) with CRH and UCN. Interacts with DLG1; this inhibits endocytosis of CRHR1 after agonist binding. Heterodimer; heterodimerizes with GPER1. Post-translationally, C-terminal Ser or Thr residues may be phosphorylated. Phosphorylation at Ser-301 by PKA prevents maximal coupling to Gq-protein, and thereby negatively regulates downstream signaling. In terms of tissue distribution, detected in brain, especially in cerebellum. Detected in pituitary gland, and at lower levels in the olfactory bulb.

Its subcellular location is the cell membrane. It localises to the endosome. Its function is as follows. G-protein coupled receptor for CRH (corticotropin-releasing factor) and UCN (urocortin). Has high affinity for CRH and UCN. Ligand binding causes a conformation change that triggers signaling via guanine nucleotide-binding proteins (G proteins) and down-stream effectors, such as adenylate cyclase. Promotes the activation of adenylate cyclase, leading to increased intracellular cAMP levels. Inhibits the activity of the calcium channel CACNA1H. Required for normal embryonic development of the adrenal gland and for normal hormonal responses to stress. Plays a role in the response to anxiogenic stimuli. This Rattus norvegicus (Rat) protein is Corticotropin-releasing factor receptor 1 (Crhr1).